A 414-amino-acid chain; its full sequence is ORC1-type DNA replication protein 1 (414 aa).

Residues 70–74, tyrosine 213, and arginine 225 contribute to the ATP site; that span reads TGKTA.

Belongs to the CDC6/cdc18 family.

Functionally, involved in regulation of DNA replication. This chain is ORC1-type DNA replication protein 1 (cdc6-1), found in Methanosarcina acetivorans (strain ATCC 35395 / DSM 2834 / JCM 12185 / C2A).